A 380-amino-acid polypeptide reads, in one-letter code: Cytochrome b (380 aa).

Helical transmembrane passes span 34 to 54, 78 to 99, 114 to 134, and 179 to 199; these read FGSLLGICLATQILTGLLLAA, WLIRNLHANGASFFFICIYLHI, WNTGVILLLTLMATAFVGYVL, and FFTLHFLLPFMIMGLTLIHLT. Heme b-binding residues include histidine 84 and histidine 98. Heme b contacts are provided by histidine 183 and histidine 197. Histidine 202 serves as a coordination point for a ubiquinone. The next 4 membrane-spanning stretches (helical) occupy residues 227–247, 289–309, 321–341, and 348–368; these read LKDTLGFMFMLLPLMTLALFS, LGGVLALAASVLILFLAPLLH, LFQLLFWTLTANLLILTWVGS, and FIIIGQLASLTYFTILLILFP.

It belongs to the cytochrome b family. In terms of assembly, the cytochrome bc1 complex contains 11 subunits: 3 respiratory subunits (MT-CYB, CYC1 and UQCRFS1), 2 core proteins (UQCRC1 and UQCRC2) and 6 low-molecular weight proteins (UQCRH/QCR6, UQCRB/QCR7, UQCRQ/QCR8, UQCR10/QCR9, UQCR11/QCR10 and a cleavage product of UQCRFS1). This cytochrome bc1 complex then forms a dimer. Requires heme b as cofactor.

It is found in the mitochondrion inner membrane. In terms of biological role, component of the ubiquinol-cytochrome c reductase complex (complex III or cytochrome b-c1 complex) that is part of the mitochondrial respiratory chain. The b-c1 complex mediates electron transfer from ubiquinol to cytochrome c. Contributes to the generation of a proton gradient across the mitochondrial membrane that is then used for ATP synthesis. The sequence is that of Cytochrome b (MT-CYB) from Grus nigricollis (Black-necked crane).